The primary structure comprises 304 residues: Aspartate carbamoyltransferase catalytic subunit (304 aa).

Arginine 55 and threonine 56 together coordinate carbamoyl phosphate. Lysine 84 contributes to the L-aspartate binding site. Carbamoyl phosphate is bound by residues arginine 105, histidine 133, and glutamine 136. The L-aspartate site is built by arginine 165 and arginine 226. The carbamoyl phosphate site is built by leucine 265 and proline 266.

It belongs to the aspartate/ornithine carbamoyltransferase superfamily. ATCase family. In terms of assembly, heterooligomer of catalytic and regulatory chains.

It catalyses the reaction carbamoyl phosphate + L-aspartate = N-carbamoyl-L-aspartate + phosphate + H(+). It functions in the pathway pyrimidine metabolism; UMP biosynthesis via de novo pathway; (S)-dihydroorotate from bicarbonate: step 2/3. Catalyzes the condensation of carbamoyl phosphate and aspartate to form carbamoyl aspartate and inorganic phosphate, the committed step in the de novo pyrimidine nucleotide biosynthesis pathway. The chain is Aspartate carbamoyltransferase catalytic subunit from Methanothrix thermoacetophila (strain DSM 6194 / JCM 14653 / NBRC 101360 / PT) (Methanosaeta thermophila).